Here is a 240-residue protein sequence, read N- to C-terminus: Adenylate dimethylallyltransferase (240 aa).

The protein belongs to the isopentenyl transferase family.

It carries out the reaction dimethylallyl diphosphate + AMP = N(6)-(dimethylallyl)adenosine 5'-phosphate + diphosphate. Its function is as follows. Transfers dimethylallyl groups to AMP as part of the biosynthesis of cytokinin phytohormones. This Agrobacterium fabrum (strain C58 / ATCC 33970) (Agrobacterium tumefaciens (strain C58)) protein is Adenylate dimethylallyltransferase (izt).